The chain runs to 916 residues: Isoleucine--tRNA ligase (916 aa).

Positions 57–67 match the 'HIGH' region motif; it reads PYANGNLHMGH. Residue Glu-554 coordinates L-isoleucyl-5'-AMP. The 'KMSKS' region signature appears at 595 to 599; that stretch reads KMSKS. Residue Lys-598 participates in ATP binding. The Zn(2+) site is built by Cys-885, Cys-888, Cys-905, and Cys-908.

This sequence belongs to the class-I aminoacyl-tRNA synthetase family. IleS type 1 subfamily. In terms of assembly, monomer. Zn(2+) serves as cofactor.

The protein localises to the cytoplasm. The enzyme catalyses tRNA(Ile) + L-isoleucine + ATP = L-isoleucyl-tRNA(Ile) + AMP + diphosphate. Catalyzes the attachment of isoleucine to tRNA(Ile). As IleRS can inadvertently accommodate and process structurally similar amino acids such as valine, to avoid such errors it has two additional distinct tRNA(Ile)-dependent editing activities. One activity is designated as 'pretransfer' editing and involves the hydrolysis of activated Val-AMP. The other activity is designated 'posttransfer' editing and involves deacylation of mischarged Val-tRNA(Ile). In Staphylococcus saprophyticus subsp. saprophyticus (strain ATCC 15305 / DSM 20229 / NCIMB 8711 / NCTC 7292 / S-41), this protein is Isoleucine--tRNA ligase.